We begin with the raw amino-acid sequence, 469 residues long: 3-isopropylmalate dehydratase large subunit (469 aa).

Residues cysteine 350, cysteine 410, and cysteine 413 each coordinate [4Fe-4S] cluster.

Belongs to the aconitase/IPM isomerase family. LeuC type 1 subfamily. In terms of assembly, heterodimer of LeuC and LeuD. Requires [4Fe-4S] cluster as cofactor.

The catalysed reaction is (2R,3S)-3-isopropylmalate = (2S)-2-isopropylmalate. It functions in the pathway amino-acid biosynthesis; L-leucine biosynthesis; L-leucine from 3-methyl-2-oxobutanoate: step 2/4. In terms of biological role, catalyzes the isomerization between 2-isopropylmalate and 3-isopropylmalate, via the formation of 2-isopropylmaleate. This chain is 3-isopropylmalate dehydratase large subunit, found in Brucella abortus (strain S19).